The following is a 274-amino-acid chain: Pyrroline-5-carboxylate reductase 3 (274 aa).

At alanine 2 the chain carries N-acetylalanine.

This sequence belongs to the pyrroline-5-carboxylate reductase family. Homodecamer; composed of 5 homodimers.

It localises to the cytoplasm. It carries out the reaction L-proline + NADP(+) = (S)-1-pyrroline-5-carboxylate + NADPH + 2 H(+). The enzyme catalyses L-proline + NAD(+) = (S)-1-pyrroline-5-carboxylate + NADH + 2 H(+). Its pathway is amino-acid biosynthesis; L-proline biosynthesis; L-proline from L-glutamate 5-semialdehyde: step 1/1. Its function is as follows. Oxidoreductase that catalyzes the last step in proline biosynthesis, which corresponds to the reduction of pyrroline-5-carboxylate (P5C) to L-proline using NAD(P)H. Proline is synthesized from either glutamate or ornithine; both are converted to P5C, and then to proline via pyrroline-5-carboxylate reductases (PYCRs). PYCR3 is exclusively linked to the biosynthesis of proline from ornithine. This is Pyrroline-5-carboxylate reductase 3 from Macaca fascicularis (Crab-eating macaque).